Here is a 201-residue protein sequence, read N- to C-terminus: Holliday junction branch migration complex subunit RuvA (201 aa).

The segment at 1–63 (MIEYVRGELA…EDAYVLYGFA (63 aa)) is domain I. The tract at residues 64-142 (DKQEREIFLL…TMGATVAGGS (79 aa)) is domain II. The segment at 143–151 (ASAGMLLQS) is flexible linker. The interval 152 to 201 (ASVEVQEEAVAALTMLGFAAAPSQKVVLAILKEEPDAPVEKVIKLALKRL) is domain III.

It belongs to the RuvA family. Homotetramer. Forms an RuvA(8)-RuvB(12)-Holliday junction (HJ) complex. HJ DNA is sandwiched between 2 RuvA tetramers; dsDNA enters through RuvA and exits via RuvB. An RuvB hexamer assembles on each DNA strand where it exits the tetramer. Each RuvB hexamer is contacted by two RuvA subunits (via domain III) on 2 adjacent RuvB subunits; this complex drives branch migration. In the full resolvosome a probable DNA-RuvA(4)-RuvB(12)-RuvC(2) complex forms which resolves the HJ.

The protein resides in the cytoplasm. The RuvA-RuvB-RuvC complex processes Holliday junction (HJ) DNA during genetic recombination and DNA repair, while the RuvA-RuvB complex plays an important role in the rescue of blocked DNA replication forks via replication fork reversal (RFR). RuvA specifically binds to HJ cruciform DNA, conferring on it an open structure. The RuvB hexamer acts as an ATP-dependent pump, pulling dsDNA into and through the RuvAB complex. HJ branch migration allows RuvC to scan DNA until it finds its consensus sequence, where it cleaves and resolves the cruciform DNA. In Bacteroides thetaiotaomicron (strain ATCC 29148 / DSM 2079 / JCM 5827 / CCUG 10774 / NCTC 10582 / VPI-5482 / E50), this protein is Holliday junction branch migration complex subunit RuvA.